Reading from the N-terminus, the 184-residue chain is Photosystem I assembly protein Ycf4 (184 aa).

The next 2 helical transmembrane spans lie at 22–42 (FCWA…GISS) and 57–77 (ILFF…LFIS).

Belongs to the Ycf4 family.

Its subcellular location is the plastid. It is found in the chloroplast thylakoid membrane. In terms of biological role, seems to be required for the assembly of the photosystem I complex. The protein is Photosystem I assembly protein Ycf4 of Illicium oligandrum (Star anise).